The primary structure comprises 384 residues: MARGEKGRGEGPAKSALRKVRTATLVINLARGWQQWANENSTRQAQEPTGWMPGGARESDQPSGPVIHPTTHQKVQSAPKSPSPKPGGYGAGQSSEGATEVSPIKRKEVTKTIVSKAYERGGDVSHLSHRYEKDGDEPEPEQPESDIDRLLRSHGSPTRRRKCANLVSELTKGWKEMEQEEQEELKCRSDSIDTEDSGYGGETEERPEQDGEQVAIARIKRPLPSQANRFTEKLNCKAQRKYSQVGHLKGRWQQWADEHIQSQKLNPFSDEFDYELAMSTRLHKGDEGYGRPKEGTRTAERAKRAEEHIYREIMDMCFIIRTMAHPRRDGKIQVTFGDLFDRYVRISDKVVGILMRARKHGLVDFEGEMLWQGRDDHVVITLLK.

Basic and acidic residues predominate over residues 1–11 (MARGEKGRGEG). Disordered stretches follow at residues 1–20 (MARG…LRKV), 32–159 (GWQQ…SPTR), and 181–211 (EQEE…EQDG). Residues 35-47 (QWANENSTRQAQE) show a composition bias toward polar residues. The span at 134-145 (DGDEPEPEQPES) shows a compositional bias: acidic residues. 2 positions are modified to phosphoserine: Ser156 and Ser191. 2 actin-binding regions span residues 202–302 (ETEE…AERA) and 303–384 (KRAE…TLLK). 2 interaction with actin regions span residues 243-288 (SQVG…GDEG) and 355-384 (MRAR…TLLK).

In terms of assembly, binds F-actin and ABLIM1, ABLIM2 and ABLIM3. Interaction with ABLIM2 and ABLIM3 enhances activity. In terms of tissue distribution, specifically expressed in heart and skeletal muscles.

The protein resides in the cytoplasm. The protein localises to the myofibril. It is found in the sarcomere. Its subcellular location is the cytoskeleton. Acts as an activator of serum response factor (SRF)-dependent transcription possibly by inducing nuclear translocation of MKL1 or MKL2 and through a mechanism requiring Rho-actin signaling. In Sus scrofa (Pig), this protein is Actin-binding Rho-activating protein (ABRA).